We begin with the raw amino-acid sequence, 250 residues long: Uracil-DNA glycosylase (250 aa).

The Proton acceptor role is filled by Asp78. The interval 228–250 is disordered; sequence RGQKPVDWSGEQNNASRQGKFAL.

The protein belongs to the uracil-DNA glycosylase (UDG) superfamily. UNG family.

It is found in the cytoplasm. It catalyses the reaction Hydrolyzes single-stranded DNA or mismatched double-stranded DNA and polynucleotides, releasing free uracil.. Its function is as follows. Excises uracil residues from the DNA which can arise as a result of misincorporation of dUMP residues by DNA polymerase or due to deamination of cytosine. The sequence is that of Uracil-DNA glycosylase from Bordetella bronchiseptica (strain ATCC BAA-588 / NCTC 13252 / RB50) (Alcaligenes bronchisepticus).